Consider the following 257-residue polypeptide: NAD-dependent protein deacetylase (257 aa).

A Deacetylase sirtuin-type domain is found at 3 to 252; the sequence is NGECLEGGRK…DLVLNEVKGI (250 aa). The NAD(+) site is built by alanine 29, threonine 33, phenylalanine 40, arginine 41, glutamine 105, isoleucine 107, aspartate 108, and histidine 123. Phenylalanine 40 is a binding site for nicotinamide. Positions 107 and 108 each coordinate nicotinamide. Histidine 123 acts as the Proton acceptor in catalysis. 4 residues coordinate Zn(2+): cysteine 131, cysteine 134, cysteine 156, and cysteine 159. Positions 195, 196, and 220 each coordinate NAD(+).

The protein belongs to the sirtuin family. Class U subfamily. Zn(2+) serves as cofactor.

Its subcellular location is the cytoplasm. It catalyses the reaction N(6)-acetyl-L-lysyl-[protein] + NAD(+) + H2O = 2''-O-acetyl-ADP-D-ribose + nicotinamide + L-lysyl-[protein]. In terms of biological role, NAD-dependent protein deacetylase which modulates the activities of several enzymes which are inactive in their acetylated form. Deacetylates the N-terminal lysine residue of Alba, the major archaeal chromatin protein and that, in turn, increases Alba's DNA binding affinity, thereby repressing transcription. In Caldivirga maquilingensis (strain ATCC 700844 / DSM 13496 / JCM 10307 / IC-167), this protein is NAD-dependent protein deacetylase.